The sequence spans 396 residues: 1-deoxy-D-xylulose 5-phosphate reductoisomerase (396 aa).

NADPH-binding residues include Thr15, Gly16, Ser17, Ile18, Gly41, and Asn130. Residue Lys131 participates in 1-deoxy-D-xylulose 5-phosphate binding. NADPH is bound at residue Glu132. Asp155 lines the Mn(2+) pocket. Ser156, Glu157, Ser181, and His204 together coordinate 1-deoxy-D-xylulose 5-phosphate. Glu157 is a binding site for Mn(2+). Gly210 is an NADPH binding site. 4 residues coordinate 1-deoxy-D-xylulose 5-phosphate: Ser217, Asn222, Lys223, and Glu226. Glu226 contributes to the Mn(2+) binding site.

The protein belongs to the DXR family. Mg(2+) is required as a cofactor. Mn(2+) serves as cofactor.

It carries out the reaction 2-C-methyl-D-erythritol 4-phosphate + NADP(+) = 1-deoxy-D-xylulose 5-phosphate + NADPH + H(+). The protein operates within isoprenoid biosynthesis; isopentenyl diphosphate biosynthesis via DXP pathway; isopentenyl diphosphate from 1-deoxy-D-xylulose 5-phosphate: step 1/6. Its function is as follows. Catalyzes the NADPH-dependent rearrangement and reduction of 1-deoxy-D-xylulose-5-phosphate (DXP) to 2-C-methyl-D-erythritol 4-phosphate (MEP). This is 1-deoxy-D-xylulose 5-phosphate reductoisomerase from Bifidobacterium longum subsp. infantis (strain ATCC 15697 / DSM 20088 / JCM 1222 / NCTC 11817 / S12).